A 266-amino-acid chain; its full sequence is UPF0354 protein Lm4b_01619 (266 aa).

Belongs to the UPF0354 family.

This Listeria monocytogenes serotype 4b (strain CLIP80459) protein is UPF0354 protein Lm4b_01619.